Reading from the N-terminus, the 664-residue chain is UvrABC system protein B (664 aa).

In terms of domain architecture, Helicase ATP-binding spans 23-412 (EGLNRGMRFQ…VVEQIIRPTG (390 aa)). Residue 36–43 (GVTGSGKT) coordinates ATP. Residues 89–112 (YYDYYQPEAYIPTKDLYIEKNADI) carry the Beta-hairpin motif. In terms of domain architecture, Helicase C-terminal spans 429–588 (DLVNEIVKVK…ITPRSVIKPL (160 aa)). In terms of domain architecture, UVR spans 622–657 (EEYMAVLEEEMYRAASELRYEDAAALRDELFRIREE).

This sequence belongs to the UvrB family. As to quaternary structure, forms a heterotetramer with UvrA during the search for lesions. Interacts with UvrC in an incision complex.

It localises to the cytoplasm. Its function is as follows. The UvrABC repair system catalyzes the recognition and processing of DNA lesions. A damage recognition complex composed of 2 UvrA and 2 UvrB subunits scans DNA for abnormalities. Upon binding of the UvrA(2)B(2) complex to a putative damaged site, the DNA wraps around one UvrB monomer. DNA wrap is dependent on ATP binding by UvrB and probably causes local melting of the DNA helix, facilitating insertion of UvrB beta-hairpin between the DNA strands. Then UvrB probes one DNA strand for the presence of a lesion. If a lesion is found the UvrA subunits dissociate and the UvrB-DNA preincision complex is formed. This complex is subsequently bound by UvrC and the second UvrB is released. If no lesion is found, the DNA wraps around the other UvrB subunit that will check the other stand for damage. The protein is UvrABC system protein B of Thermotoga maritima (strain ATCC 43589 / DSM 3109 / JCM 10099 / NBRC 100826 / MSB8).